Consider the following 211-residue polypeptide: Ribonuclease MRP protein subunit rmp1 (211 aa).

A helical membrane pass occupies residues 73–93 (PALGLVLLGILARVWFVMGGI). Ser156 is modified (phosphoserine). The interval 178–211 (SQGTKRKSKNSNSTVKKKKKRARKGRDEIDDIFG) is disordered. Positions 181 to 201 (TKRKSKNSNSTVKKKKKRARK) are enriched in basic residues.

As to quaternary structure, component of RNase MRP complex which consists of an RNA moiety and at least 10 protein subunits.

The protein resides in the membrane. It is found in the nucleus. Its subcellular location is the nucleolus. Its function is as follows. Functions as part of ribonuclease MRP (RNase MRP), which is involved in rRNA processing in mitochondria. The sequence is that of Ribonuclease MRP protein subunit rmp1 from Schizosaccharomyces pombe (strain 972 / ATCC 24843) (Fission yeast).